The sequence spans 113 residues: Large ribosomal subunit protein uL22 (113 aa).

Belongs to the universal ribosomal protein uL22 family. As to quaternary structure, part of the 50S ribosomal subunit.

In terms of biological role, this protein binds specifically to 23S rRNA; its binding is stimulated by other ribosomal proteins, e.g. L4, L17, and L20. It is important during the early stages of 50S assembly. It makes multiple contacts with different domains of the 23S rRNA in the assembled 50S subunit and ribosome. Its function is as follows. The globular domain of the protein is located near the polypeptide exit tunnel on the outside of the subunit, while an extended beta-hairpin is found that lines the wall of the exit tunnel in the center of the 70S ribosome. The sequence is that of Large ribosomal subunit protein uL22 from Geobacillus thermodenitrificans (strain NG80-2).